We begin with the raw amino-acid sequence, 410 residues long: Argininosuccinate synthase (410 aa).

ATP contacts are provided by residues 11-19 (AYSGGLDTS) and A37. Residues Y88 and S93 each coordinate L-citrulline. ATP is bound at residue 116–124 (SHGCTGKGN). T120, N124, and D125 together coordinate L-aspartate. Position 124 (N124) interacts with L-citrulline. R128, S181, S190, E269, and Y281 together coordinate L-citrulline.

This sequence belongs to the argininosuccinate synthase family. Type 1 subfamily. As to quaternary structure, homotetramer.

It localises to the cytoplasm. The enzyme catalyses L-citrulline + L-aspartate + ATP = 2-(N(omega)-L-arginino)succinate + AMP + diphosphate + H(+). It functions in the pathway amino-acid biosynthesis; L-arginine biosynthesis; L-arginine from L-ornithine and carbamoyl phosphate: step 2/3. In Schizosaccharomyces pombe (strain 972 / ATCC 24843) (Fission yeast), this protein is Argininosuccinate synthase (arg12).